The primary structure comprises 953 residues: Isoleucine--tRNA ligase (953 aa).

Positions 58 to 68 (PYANGFIHLGH) match the 'HIGH' region motif. Glu-573 is a binding site for L-isoleucyl-5'-AMP. Positions 614 to 618 (KMSKS) match the 'KMSKS' region motif. ATP is bound at residue Lys-617. Residues Cys-916, Cys-919, Cys-936, and Cys-939 each contribute to the Zn(2+) site.

The protein belongs to the class-I aminoacyl-tRNA synthetase family. IleS type 1 subfamily. As to quaternary structure, monomer. It depends on Zn(2+) as a cofactor.

It is found in the cytoplasm. The catalysed reaction is tRNA(Ile) + L-isoleucine + ATP = L-isoleucyl-tRNA(Ile) + AMP + diphosphate. Catalyzes the attachment of isoleucine to tRNA(Ile). As IleRS can inadvertently accommodate and process structurally similar amino acids such as valine, to avoid such errors it has two additional distinct tRNA(Ile)-dependent editing activities. One activity is designated as 'pretransfer' editing and involves the hydrolysis of activated Val-AMP. The other activity is designated 'posttransfer' editing and involves deacylation of mischarged Val-tRNA(Ile). The polypeptide is Isoleucine--tRNA ligase (Blochmanniella floridana).